The sequence spans 202 residues: uncharacterized protein (202 aa).

Transmembrane regions (helical) follow at residues 34–54 (AAYV…QARI), 102–122 (MGVA…PLVI), and 125–145 (ILPL…FNKA). Positions 165 to 202 (NKPAAAVTGTSSNSNNASAKSDGPTITELNENETEKSS) are disordered. The span at 168 to 185 (AAAVTGTSSNSNNASAKS) shows a compositional bias: low complexity. Phosphoserine is present on residues serine 185 and serine 201.

This sequence belongs to the PHO88 family.

It localises to the endoplasmic reticulum membrane. This is an uncharacterized protein from Schizosaccharomyces pombe (strain 972 / ATCC 24843) (Fission yeast).